We begin with the raw amino-acid sequence, 289 residues long: ATP synthase gamma chain (289 aa).

Belongs to the ATPase gamma chain family. As to quaternary structure, F-type ATPases have 2 components, CF(1) - the catalytic core - and CF(0) - the membrane proton channel. CF(1) has five subunits: alpha(3), beta(3), gamma(1), delta(1), epsilon(1). CF(0) has three main subunits: a, b and c.

The protein localises to the cell membrane. Functionally, produces ATP from ADP in the presence of a proton gradient across the membrane. The gamma chain is believed to be important in regulating ATPase activity and the flow of protons through the CF(0) complex. This chain is ATP synthase gamma chain, found in Mycoplasmopsis synoviae (strain 53) (Mycoplasma synoviae).